The chain runs to 131 residues: Profilin-2 (131 aa).

Belongs to the profilin family. As to quaternary structure, occurs in many kinds of cells as a complex with monomeric actin in a 1:1 ratio.

The protein resides in the cytoplasm. It localises to the cytoskeleton. Functionally, binds to actin and affects the structure of the cytoskeleton. At high concentrations, profilin prevents the polymerization of actin, whereas it enhances it at low concentrations. By binding to PIP2, it inhibits the formation of IP3 and DG. The sequence is that of Profilin-2 (PRO2) from Parietaria judaica (Pellitory-of-the-wall).